We begin with the raw amino-acid sequence, 183 residues long: Small ribosomal subunit protein bS16 (183 aa).

Residues 149 to 161 (EKKAAEAAAKAEA) are compositionally biased toward basic and acidic residues. A disordered region spans residues 149 to 183 (EKKAAEAAAKAEAEAANAPAEEAPAAEATEAPAEA). Over residues 162-183 (EAANAPAEEAPAAEATEAPAEA) the composition is skewed to low complexity.

It belongs to the bacterial ribosomal protein bS16 family.

This Phocaeicola vulgatus (strain ATCC 8482 / DSM 1447 / JCM 5826 / CCUG 4940 / NBRC 14291 / NCTC 11154) (Bacteroides vulgatus) protein is Small ribosomal subunit protein bS16.